Consider the following 169-residue polypeptide: Peptide methionine sulfoxide reductase MsrA (169 aa).

The active site involves Cys10.

This sequence belongs to the MsrA Met sulfoxide reductase family.

It catalyses the reaction L-methionyl-[protein] + [thioredoxin]-disulfide + H2O = L-methionyl-(S)-S-oxide-[protein] + [thioredoxin]-dithiol. The catalysed reaction is [thioredoxin]-disulfide + L-methionine + H2O = L-methionine (S)-S-oxide + [thioredoxin]-dithiol. In terms of biological role, has an important function as a repair enzyme for proteins that have been inactivated by oxidation. Catalyzes the reversible oxidation-reduction of methionine sulfoxide in proteins to methionine. The chain is Peptide methionine sulfoxide reductase MsrA from Streptococcus agalactiae serotype Ia (strain ATCC 27591 / A909 / CDC SS700).